Consider the following 272-residue polypeptide: F-actin-capping protein subunit beta (272 aa).

The protein belongs to the F-actin-capping protein beta subunit family. As to quaternary structure, component of the F-actin capping complex, composed of a heterodimer of an alpha and a beta subunit.

Its subcellular location is the cytoplasm. It localises to the cytoskeleton. Its function is as follows. F-actin-capping proteins bind in a Ca(2+)-independent manner to the fast growing ends of actin filaments (barbed end) thereby blocking the exchange of subunits at these ends. Unlike other capping proteins (such as gelsolin and severin), these proteins do not sever actin filaments. The sequence is that of F-actin-capping protein subunit beta (acpA) from Dictyostelium discoideum (Social amoeba).